Consider the following 541-residue polypeptide: Chaperonin GroEL (541 aa).

Residues 29 to 32 (TIGP), 86 to 90 (DGTTT), glycine 413, and aspartate 494 each bind ATP.

It belongs to the chaperonin (HSP60) family. Forms a cylinder of 14 subunits composed of two heptameric rings stacked back-to-back. Interacts with the co-chaperonin GroES.

The protein resides in the cytoplasm. It catalyses the reaction ATP + H2O + a folded polypeptide = ADP + phosphate + an unfolded polypeptide.. Functionally, together with its co-chaperonin GroES, plays an essential role in assisting protein folding. The GroEL-GroES system forms a nano-cage that allows encapsulation of the non-native substrate proteins and provides a physical environment optimized to promote and accelerate protein folding. The sequence is that of Chaperonin GroEL from Lachnospira eligens (strain ATCC 27750 / DSM 3376 / VPI C15-48 / C15-B4) (Eubacterium eligens).